A 125-amino-acid polypeptide reads, in one-letter code: Cu-Zn superoxide dismutase-like protein (125 aa).

A disulfide bridge links Cys52 with Cys102.

This sequence belongs to the Cu-Zn superoxide dismutase family.

It is found in the host cytoplasm. Its function is as follows. Virion protein with no enzymatic activity. The polypeptide is Cu-Zn superoxide dismutase-like protein (Camelpox virus (strain M-96)).